We begin with the raw amino-acid sequence, 112 residues long: Small ribosomal subunit protein eS24 (112 aa).

The tract at residues 88-112 (RGMAGEEEGNADAQDAPSGDAAEAS) is disordered.

Belongs to the eukaryotic ribosomal protein eS24 family.

The polypeptide is Small ribosomal subunit protein eS24 (Methanospirillum hungatei JF-1 (strain ATCC 27890 / DSM 864 / NBRC 100397 / JF-1)).